A 577-amino-acid polypeptide reads, in one-letter code: Proton channel OTOP3 (577 aa).

The tract at residues 1 to 46 (MASQTSAPAEPAPMPSPEAKTTEGASSYDQADMETKHAGSPCPPKQ) is disordered. Over 1–69 (MASQTSAPAE…RDRQAQKAGQ (69 aa)) the chain is Cytoplasmic. Residues 70-90 (LFSGLLALNVVFLGGAFICSM) traverse the membrane as a helical segment. Topologically, residues 91–100 (IFNKVSVTLG) are extracellular. A helical membrane pass occupies residues 101–124 (DVWILLAALKVLSLLWLLYYTVGT). Residues 125–140 (TRKPHAVLYRDPHAGP) lie on the Cytoplasmic side of the membrane. A helical transmembrane segment spans residues 141–162 (IWVRGSLVLFGSCTVCLNIFRM). Over 163–174 (GYDVSHIHCKSE) the chain is Extracellular. Residues 175–198 (VELIFPAIEIVFMIIQTWVLWRHC) traverse the membrane as a helical segment. The Cytoplasmic segment spans residues 199–206 (KDCVQVQT). Residues 207–229 (NFTRCGLMLTLATNLLMWVLAVT) form a helical membrane-spanning segment. Topologically, residues 230–276 (NDSMHREIEAELDALMEKFSGNGTNTCMCLNTTVCEVFRKGYLMLYP) are extracellular. Residues 277–293 (FSTEYCLICCAVLFVMW) traverse the membrane as a helical segment. Topologically, residues 294-319 (KNVSRSLAAHTGAHPNRSPFRLHGTI) are cytoplasmic. Residues 320–339 (FGPLLGLLALVAGVCVFVLF) traverse the membrane as a helical segment. The Extracellular portion of the chain corresponds to 340 to 353 (QIEASGPDIARQYF). Residues 354–376 (TLYYAFYVAVLPTMSLACLAGTA) traverse the membrane as a helical segment. At 377-394 (IHGLEERELDTLKNPTRS) the chain is on the cytoplasmic side. Residues 395–416 (LDVVLLMGAALGQMGIAYFSIV) form a helical membrane-spanning segment. Residues 417 to 427 (AIVATQPHELL) are Extracellular-facing. The chain crosses the membrane as a helical span at residues 428–450 (NQLILAYSLLLILQHITQNLFII). The Cytoplasmic portion of the chain corresponds to 451 to 510 (EGLHRRPLWEPAVSGVMEKQDVELPRRGSLRELGQDLRRASRAYIHSFSHLNWKRRMLKE). A helical membrane pass occupies residues 511–528 (ISLFLILCNITLWMMPAF). Topologically, residues 529-547 (GIHPEFENGLEKDFYGYRT) are extracellular. A helical transmembrane segment spans residues 548–570 (WFTIVNFGLPLGVFYRMHSVGGL). Topologically, residues 571–577 (VEVYLGA) are cytoplasmic.

The protein belongs to the otopetrin family. As to quaternary structure, homodimer. Expressed in epidermis, small intestine, stomach and retina.

The protein localises to the cell membrane. The catalysed reaction is H(+)(in) = H(+)(out). Activated by extracellular acidification. Activated by Zn(2+) under non-acidic conditions. In terms of biological role, proton-selective channel gated by extracellular protons. The polypeptide is Proton channel OTOP3 (Mus musculus (Mouse)).